The chain runs to 172 residues: Ribosome maturation factor RimM (172 aa).

Residues 93–167 (DEHEFYYHEI…RVVITPIPGM (75 aa)) enclose the PRC barrel domain.

It belongs to the RimM family. As to quaternary structure, binds ribosomal protein uS19.

It is found in the cytoplasm. An accessory protein needed during the final step in the assembly of 30S ribosomal subunit, possibly for assembly of the head region. Essential for efficient processing of 16S rRNA. May be needed both before and after RbfA during the maturation of 16S rRNA. It has affinity for free ribosomal 30S subunits but not for 70S ribosomes. The polypeptide is Ribosome maturation factor RimM (Exiguobacterium sp. (strain ATCC BAA-1283 / AT1b)).